A 158-amino-acid chain; its full sequence is Transcription antitermination protein NusB (158 aa).

Positions 1 to 13 (MSEAGDTSPQPGK) are enriched in polar residues. Residues 1-24 (MSEAGDTSPQPGKTGQPKAGDRRR) are disordered.

It belongs to the NusB family.

Its function is as follows. Involved in transcription antitermination. Required for transcription of ribosomal RNA (rRNA) genes. Binds specifically to the boxA antiterminator sequence of the ribosomal RNA (rrn) operons. This is Transcription antitermination protein NusB from Marinobacter nauticus (strain ATCC 700491 / DSM 11845 / VT8) (Marinobacter aquaeolei).